Consider the following 290-residue polypeptide: Membrane protein insertase YidC (290 aa).

Positions 1-19 are cleaved as a signal peptide; the sequence is MKKKTLLPLFLGIMVFLAG. A lipid anchor (N-palmitoyl cysteine) is attached at cysteine 20. The S-diacylglycerol cysteine moiety is linked to residue cysteine 20. A run of 5 helical transmembrane segments spans residues 56–76, 134–154, 176–196, 207–224, and 229–251; these read YGLA…PFML, MLGC…YFVL, PDIW…YVSS, GYMM…ISLS, and LGLY…NIYY. Residues 270–290 are disordered; that stretch reads HNGGSNKKGKNTQVVSKKKKK.

The protein belongs to the OXA1/ALB3/YidC family. Type 2 subfamily.

The protein resides in the cell membrane. Required for the insertion and/or proper folding and/or complex formation of integral membrane proteins into the membrane. Involved in integration of membrane proteins that insert both dependently and independently of the Sec translocase complex, as well as at least some lipoproteins. In Staphylococcus aureus (strain MRSA252), this protein is Membrane protein insertase YidC.